A 466-amino-acid chain; its full sequence is MSVAPVVDVLQGRVAVDSEVTVRGWIRTRRDSKAGISFLAVYDGSCFNPLQAVVNNNLPNYQDEVLHLTTGCSVEVTGTVVASLGQGQNFELQATKIVVIGLVEDPDTYPMAAKRHSIEYLREVAHLRPRTNLIGAVARMRHTLAQALHRFFHENGYFWVSTPLITAADTEGAGEMFRVSTLDLQNLPLTDKGEVDFNQDFFGREAFLTVSGQLNGEAYACALSKVYTFGPTFRAENSNTSRHLAEFWMLEPEIAFANLNDAATLAENMLKYVFKAALAERADDLQFFAERVDKDVITRLEKFINSDFAQIDYTSAIEILQNCGQKFENPVFWGVDLSSEHERYLAEKHFQAPVVVKNYPKDIKAFYMRMNDDGKTVAALDVLAPGIGEIIGGSQREERLDMLDKRLEEMGLNKEDYWWYRDLRRYGTVPHSGFGLGFERLVAYVTGVPNVRDVIPFPRTPRSANF.

This sequence belongs to the class-II aminoacyl-tRNA synthetase family. In terms of assembly, homodimer.

The protein resides in the cytoplasm. It catalyses the reaction tRNA(Asn) + L-asparagine + ATP = L-asparaginyl-tRNA(Asn) + AMP + diphosphate + H(+). The chain is Asparagine--tRNA ligase from Photorhabdus laumondii subsp. laumondii (strain DSM 15139 / CIP 105565 / TT01) (Photorhabdus luminescens subsp. laumondii).